The sequence spans 155 residues: Ribosome maturation factor RimP (155 aa).

This sequence belongs to the RimP family.

It is found in the cytoplasm. Functionally, required for maturation of 30S ribosomal subunits. This Listeria welshimeri serovar 6b (strain ATCC 35897 / DSM 20650 / CCUG 15529 / CIP 8149 / NCTC 11857 / SLCC 5334 / V8) protein is Ribosome maturation factor RimP.